Here is a 180-residue protein sequence, read N- to C-terminus: NAD(P)H-quinone oxidoreductase subunit I, chloroplastic (180 aa).

4Fe-4S ferredoxin-type domains are found at residues Gly-55–Arg-84 and Leu-95–Glu-124. The [4Fe-4S] cluster site is built by Cys-64, Cys-67, Cys-70, Cys-74, Cys-104, Cys-107, Cys-110, and Cys-114.

Belongs to the complex I 23 kDa subunit family. In terms of assembly, NDH is composed of at least 16 different subunits, 5 of which are encoded in the nucleus. [4Fe-4S] cluster serves as cofactor.

It is found in the plastid. Its subcellular location is the chloroplast thylakoid membrane. It carries out the reaction a plastoquinone + NADH + (n+1) H(+)(in) = a plastoquinol + NAD(+) + n H(+)(out). The enzyme catalyses a plastoquinone + NADPH + (n+1) H(+)(in) = a plastoquinol + NADP(+) + n H(+)(out). In terms of biological role, NDH shuttles electrons from NAD(P)H:plastoquinone, via FMN and iron-sulfur (Fe-S) centers, to quinones in the photosynthetic chain and possibly in a chloroplast respiratory chain. The immediate electron acceptor for the enzyme in this species is believed to be plastoquinone. Couples the redox reaction to proton translocation, and thus conserves the redox energy in a proton gradient. The sequence is that of NAD(P)H-quinone oxidoreductase subunit I, chloroplastic from Amborella trichopoda.